The chain runs to 88 residues: Putative sulfur carrier protein AF_0552 (88 aa).

It belongs to the sulfur carrier protein CysO family.

The polypeptide is Putative sulfur carrier protein AF_0552 (Archaeoglobus fulgidus (strain ATCC 49558 / DSM 4304 / JCM 9628 / NBRC 100126 / VC-16)).